Consider the following 452-residue polypeptide: MTTNAPGAVILAAGKGTRMKSRLPKVLHPIAGKPMLGHVLSAVSALGSERPVLVVGPGMDEVATYARGLVSGLTIAVQEKQLGTGDAVRAAAPHIDKKESVVLVVFGDTPLVRAETLADMTRRCEEGSDIVVLGFEAADPTGYGRLILDGNDVVRIVEHKDASEEERKNKLCFGGPMAVRAAHLPALLAKLTNKNAQGEFYMTDFVAHGRAAGLVCSAVFCLEADMQGVNSRADLAAAEATMQQRLRMAAMAGGVTMLDPSSVYLSMDTEFGEDVTVGQNVVFGPGCVIANGVTIKAFSHLEGAHVAEGAEIGPFARIRPGSEIGRKARIGNFVETKKARIEDGAKVNHLSYIGDARVGAGANIGAGTITCNYDGYNKFFTDIGAGAFIGSNSSLVAPVSIGDGAYLGSGSVVTKDVAADALGVARARQFEKPGWAAAFHAKHKDKKKASGE.

The segment at 1-232 is pyrophosphorylase; it reads MTTNAPGAVI…EADMQGVNSR (232 aa). UDP-N-acetyl-alpha-D-glucosamine is bound by residues 11-14, Lys-25, Gln-78, and 83-84; these read LAAG and GT. Position 108 (Asp-108) interacts with Mg(2+). UDP-N-acetyl-alpha-D-glucosamine contacts are provided by Gly-144, Glu-158, and Asn-230. Position 230 (Asn-230) interacts with Mg(2+). The linker stretch occupies residues 233–253; it reads ADLAAAEATMQQRLRMAAMAG. The interval 254-452 is N-acetyltransferase; it reads GVTMLDPSSV…HKDKKKASGE (199 aa). Residues Arg-319 and Lys-337 each coordinate UDP-N-acetyl-alpha-D-glucosamine. His-349 (proton acceptor) is an active-site residue. UDP-N-acetyl-alpha-D-glucosamine is bound by residues Tyr-352 and Asn-363. Acetyl-CoA-binding positions include Ala-366, 372–373, Ser-391, Ser-409, and Arg-426; that span reads NY.

In the N-terminal section; belongs to the N-acetylglucosamine-1-phosphate uridyltransferase family. The protein in the C-terminal section; belongs to the transferase hexapeptide repeat family. As to quaternary structure, homotrimer. The cofactor is Mg(2+).

The protein resides in the cytoplasm. The enzyme catalyses alpha-D-glucosamine 1-phosphate + acetyl-CoA = N-acetyl-alpha-D-glucosamine 1-phosphate + CoA + H(+). It carries out the reaction N-acetyl-alpha-D-glucosamine 1-phosphate + UTP + H(+) = UDP-N-acetyl-alpha-D-glucosamine + diphosphate. Its pathway is nucleotide-sugar biosynthesis; UDP-N-acetyl-alpha-D-glucosamine biosynthesis; N-acetyl-alpha-D-glucosamine 1-phosphate from alpha-D-glucosamine 6-phosphate (route II): step 2/2. The protein operates within nucleotide-sugar biosynthesis; UDP-N-acetyl-alpha-D-glucosamine biosynthesis; UDP-N-acetyl-alpha-D-glucosamine from N-acetyl-alpha-D-glucosamine 1-phosphate: step 1/1. It functions in the pathway bacterial outer membrane biogenesis; LPS lipid A biosynthesis. Its function is as follows. Catalyzes the last two sequential reactions in the de novo biosynthetic pathway for UDP-N-acetylglucosamine (UDP-GlcNAc). The C-terminal domain catalyzes the transfer of acetyl group from acetyl coenzyme A to glucosamine-1-phosphate (GlcN-1-P) to produce N-acetylglucosamine-1-phosphate (GlcNAc-1-P), which is converted into UDP-GlcNAc by the transfer of uridine 5-monophosphate (from uridine 5-triphosphate), a reaction catalyzed by the N-terminal domain. The chain is Bifunctional protein GlmU from Parvibaculum lavamentivorans (strain DS-1 / DSM 13023 / NCIMB 13966).